A 344-amino-acid chain; its full sequence is Phosphate acyltransferase (344 aa).

It belongs to the PlsX family. Homodimer. Probably interacts with PlsY.

The protein localises to the cytoplasm. The catalysed reaction is a fatty acyl-[ACP] + phosphate = an acyl phosphate + holo-[ACP]. It functions in the pathway lipid metabolism; phospholipid metabolism. Catalyzes the reversible formation of acyl-phosphate (acyl-PO(4)) from acyl-[acyl-carrier-protein] (acyl-ACP). This enzyme utilizes acyl-ACP as fatty acyl donor, but not acyl-CoA. The sequence is that of Phosphate acyltransferase from Enterobacter sp. (strain 638).